A 122-amino-acid chain; its full sequence is MIQQETRLKVADNTGAKELLCIRVLGGSKRRYAYLGDTIVCTVKDAIPGGNVKKGEVVKAVVVRTVKSHRRPDGSYIKFDENAAVLLKGDGEPRGTRIFGPIARELREKKFMRIVSLAPEVI.

Belongs to the universal ribosomal protein uL14 family. In terms of assembly, part of the 50S ribosomal subunit. Forms a cluster with proteins L3 and L19. In the 70S ribosome, L14 and L19 interact and together make contacts with the 16S rRNA in bridges B5 and B8.

In terms of biological role, binds to 23S rRNA. Forms part of two intersubunit bridges in the 70S ribosome. This is Large ribosomal subunit protein uL14 from Cutibacterium acnes (strain DSM 16379 / KPA171202) (Propionibacterium acnes).